Here is a 404-residue protein sequence, read N- to C-terminus: Glucose-1-phosphate adenylyltransferase (404 aa).

Alpha-D-glucose 1-phosphate is bound by residues Tyr-99, Gly-164, 179–180 (EK), and Ser-197.

Belongs to the bacterial/plant glucose-1-phosphate adenylyltransferase family. Homotetramer.

It carries out the reaction alpha-D-glucose 1-phosphate + ATP + H(+) = ADP-alpha-D-glucose + diphosphate. Its pathway is glycan biosynthesis; glycogen biosynthesis. Functionally, involved in the biosynthesis of ADP-glucose, a building block required for the elongation reactions to produce glycogen. Catalyzes the reaction between ATP and alpha-D-glucose 1-phosphate (G1P) to produce pyrophosphate and ADP-Glc. This is Glucose-1-phosphate adenylyltransferase from Rhodococcus erythropolis (strain PR4 / NBRC 100887).